The primary structure comprises 309 residues: Glutaminase (309 aa).

Positions 65, 117, 162, 169, 193, 245, and 263 each coordinate substrate.

The protein belongs to the glutaminase family. As to quaternary structure, homotetramer.

The catalysed reaction is L-glutamine + H2O = L-glutamate + NH4(+). The protein is Glutaminase of Clostridioides difficile (strain 630) (Peptoclostridium difficile).